The primary structure comprises 618 residues: UvrABC system protein C (618 aa).

In terms of domain architecture, GIY-YIG spans 20–98 (TAPGVYRMYA…IKSLSPRYNV (79 aa)). The region spanning 207–242 (DQLGEEIMHSMQQASEALEFERAARLRDLLSSLRSM) is the UVR domain.

It belongs to the UvrC family. As to quaternary structure, interacts with UvrB in an incision complex.

The protein resides in the cytoplasm. The UvrABC repair system catalyzes the recognition and processing of DNA lesions. UvrC both incises the 5' and 3' sides of the lesion. The N-terminal half is responsible for the 3' incision and the C-terminal half is responsible for the 5' incision. The sequence is that of UvrABC system protein C from Xanthomonas campestris pv. campestris (strain 8004).